The primary structure comprises 122 residues: Large ribosomal subunit protein uL18 (122 aa).

This sequence belongs to the universal ribosomal protein uL18 family. As to quaternary structure, part of the 50S ribosomal subunit; part of the 5S rRNA/L5/L18/L25 subcomplex. Contacts the 5S and 23S rRNAs.

This is one of the proteins that bind and probably mediate the attachment of the 5S RNA into the large ribosomal subunit, where it forms part of the central protuberance. In Desulfatibacillum aliphaticivorans, this protein is Large ribosomal subunit protein uL18.